Here is a 427-residue protein sequence, read N- to C-terminus: Beta-1,3-galactosyl-O-glycosyl-glycoprotein beta-1,6-N-acetylglucosaminyltransferase (427 aa).

Residues Met-1 to Lys-9 are Cytoplasmic-facing. The segment at Leu-5–Lys-9 is mediates interaction with GOLPH3 and is necessary and sufficient for localization to the Golgi. Residues Leu-10–Leu-32 form a helical; Signal-anchor for type II membrane protein membrane-spanning segment. The tract at residues Arg-33–Phe-121 is stem region. Over Arg-33–Pro-427 the chain is Lumenal. Residues Asn-58 and Asn-95 are each glycosylated (N-linked (GlcNAc...) asparagine). Cystine bridges form between Cys-59–Cys-412, Cys-100–Cys-172, Cys-151–Cys-199, and Cys-372–Cys-380. The tract at residues Pro-122–Pro-427 is catalytic. Residues Val-128–His-130, Asp-155–Lys-157, and Tyr-187 contribute to the UDP-N-acetyl-alpha-D-glucosamine site. Residues Glu-243, Lys-251, Arg-254, Glu-320, Lys-341, and Tyr-358 each coordinate a glycoprotein. The active-site Nucleophile is the Glu-320. Residues Arg-377 and Lys-400 each coordinate UDP-N-acetyl-alpha-D-glucosamine.

This sequence belongs to the glycosyltransferase 14 family. Interacts with GOLPH3; may control GCNT1 retention in the Golgi. In terms of tissue distribution, expressed in tracheal submucosal glands and epithelium (at protein level).

Its subcellular location is the golgi apparatus membrane. It catalyses the reaction a 3-O-[beta-D-galactosyl-(1-&gt;3)-N-acetyl-alpha-D-galactosaminyl]-L-seryl-[protein] + UDP-N-acetyl-alpha-D-glucosamine = 3-O-{beta-D-galactosyl-(1-&gt;3)-[N-acetyl-beta-D-glucosaminyl-(1-&gt;6)]-N-acetyl-alpha-D-galactosaminyl}-L-seryl-[protein] + UDP + H(+). It carries out the reaction a 3-O-[beta-D-galactosyl-(1-&gt;3)-N-acetyl-alpha-D-galactosaminyl]-L-threonyl-[protein] + UDP-N-acetyl-alpha-D-glucosamine = a 3-O-{beta-D-galactosyl-(1-&gt;3)-[N-acetyl-beta-D-glucosaminyl-(1-&gt;6)]-N-acetyl-alpha-D-galactosaminyl}-L-threonyl-[protein] + UDP + H(+). The enzyme catalyses a globoside GalGb4Cer + UDP-N-acetyl-alpha-D-glucosamine = a globoside GlcNAc-(beta1-&gt;6)-GalGb4Cer + UDP + H(+). The catalysed reaction is a ganglioside GA1 + UDP-N-acetyl-alpha-D-glucosamine = a ganglioside beta-D-GlcNAc-(1-&gt;6)-GA1 + UDP + H(+). The protein operates within protein modification; protein glycosylation. It participates in glycolipid biosynthesis. Its function is as follows. Glycosyltransferase that catalyzes the transfer of an N-acetylglucosamine (GlcNAc) moiety in beta1-6 linkage from UDP-GlcNAc onto mucin-type core 1 O-glycan to form the branched mucin-type core 2 O-glycan. The catalysis is metal ion-independent and occurs with inversion of the anomeric configuration of sugar donor. Selectively involved in synthesis of mucin-type core 2 O-glycans that serve as scaffolds for the display of selectin ligand sialyl Lewis X epitope by myeloid cells, with an impact on homeostasis and recruitment to inflammatory sites. Can also act on glycolipid substrates. Transfers GlcNAc moiety to GalGb4Cer globosides in a reaction step to the synthesis of stage-specific embryonic antigen 1 (SSEA-1) determinant. Can use Galbeta1-3GalNAcalpha1- and Galbeta1-3GalNAcbeta1- oligosaccharide derivatives as acceptor substrates. This Bos taurus (Bovine) protein is Beta-1,3-galactosyl-O-glycosyl-glycoprotein beta-1,6-N-acetylglucosaminyltransferase (GCNT1).